We begin with the raw amino-acid sequence, 830 residues long: Leucine--tRNA ligase (830 aa).

The 'HIGH' region signature appears at 34 to 44 (PYPSGNIHMGH). The 'KMSKS' region signature appears at 592–596 (KMSKS). Lys595 serves as a coordination point for ATP.

Belongs to the class-I aminoacyl-tRNA synthetase family.

Its subcellular location is the cytoplasm. It catalyses the reaction tRNA(Leu) + L-leucine + ATP = L-leucyl-tRNA(Leu) + AMP + diphosphate. The polypeptide is Leucine--tRNA ligase (Ehrlichia ruminantium (strain Welgevonden)).